Here is a 238-residue protein sequence, read N- to C-terminus: 7-cyano-7-deazaguanine synthase (238 aa).

Residue 15–25 (FSGGQDSTTCL) participates in ATP binding. Residues cysteine 203, cysteine 218, cysteine 221, and cysteine 224 each coordinate Zn(2+).

This sequence belongs to the QueC family. The cofactor is Zn(2+).

The catalysed reaction is 7-carboxy-7-deazaguanine + NH4(+) + ATP = 7-cyano-7-deazaguanine + ADP + phosphate + H2O + H(+). Its pathway is purine metabolism; 7-cyano-7-deazaguanine biosynthesis. In terms of biological role, catalyzes the ATP-dependent conversion of 7-carboxy-7-deazaguanine (CDG) to 7-cyano-7-deazaguanine (preQ(0)). The chain is 7-cyano-7-deazaguanine synthase from Alkalilimnicola ehrlichii (strain ATCC BAA-1101 / DSM 17681 / MLHE-1).